Reading from the N-terminus, the 367-residue chain is tRNA-specific 2-thiouridylase MnmA (367 aa).

Residues 10 to 17 (AMSGGVDS) and Met36 each bind ATP. The active-site Nucleophile is Cys106. A disulfide bridge connects residues Cys106 and Cys204. An ATP-binding site is contributed by Gly130. The interval 154 to 156 (KDQ) is interaction with tRNA. The Cysteine persulfide intermediate role is filled by Cys204. The interaction with tRNA stretch occupies residues 310–311 (RY).

The protein belongs to the MnmA/TRMU family.

It is found in the cytoplasm. It catalyses the reaction S-sulfanyl-L-cysteinyl-[protein] + uridine(34) in tRNA + AH2 + ATP = 2-thiouridine(34) in tRNA + L-cysteinyl-[protein] + A + AMP + diphosphate + H(+). In terms of biological role, catalyzes the 2-thiolation of uridine at the wobble position (U34) of tRNA, leading to the formation of s(2)U34. The protein is tRNA-specific 2-thiouridylase MnmA of Desulforamulus reducens (strain ATCC BAA-1160 / DSM 100696 / MI-1) (Desulfotomaculum reducens).